Consider the following 101-residue polypeptide: MAKKSSIEKNNRRKRLTKNAAPKRAKLKAIIADKSKPMEERFAATLKLSEMPRNSSATRIRNRCEITGRARSVYRKNKLSRIAIRDLGSRGLVPGLVKSSW.

Residues 1–10 (MAKKSSIEKN) show a composition bias toward basic and acidic residues. A disordered region spans residues 1–24 (MAKKSSIEKNNRRKRLTKNAAPKR). The segment covering 11-24 (NRRKRLTKNAAPKR) has biased composition (basic residues).

It belongs to the universal ribosomal protein uS14 family. In terms of assembly, part of the 30S ribosomal subunit. Contacts proteins S3 and S10.

In terms of biological role, binds 16S rRNA, required for the assembly of 30S particles and may also be responsible for determining the conformation of the 16S rRNA at the A site. The polypeptide is Small ribosomal subunit protein uS14 (Rhodopseudomonas palustris (strain BisB18)).